The chain runs to 425 residues: NAD kinase 2, mitochondrial (425 aa).

The transit peptide at 1 to 45 (MDTSAIQQTLVKIYQRQAWQPPRKASKNETTVGKPRELAGGGSPA) directs the protein to the mitochondrion. Residues 20–46 (QPPRKASKNETTVGKPRELAGGGSPAD) form a disordered region. At lysine 59 the chain carries N6-acetyllysine; alternate. N6-succinyllysine; alternate is present on lysine 59. A Phosphoserine modification is found at serine 171. Lysine 285 is modified (N6-succinyllysine). Residue lysine 300 is modified to N6-acetyllysine; alternate. The residue at position 300 (lysine 300) is an N6-succinyllysine; alternate. Serine 350 carries the post-translational modification Phosphoserine. N6-acetyllysine is present on lysine 380.

It belongs to the NAD kinase family. As to quaternary structure, homodimer.

It localises to the mitochondrion. It catalyses the reaction NAD(+) + ATP = ADP + NADP(+) + H(+). Inhibited by NADH, NADPH and NADP(+). Functionally, mitochondrial NAD(+) kinase that phosphorylates NAD(+) to yield NADP(+). Can use both ATP or inorganic polyphosphate as the phosphoryl donor. In Rattus norvegicus (Rat), this protein is NAD kinase 2, mitochondrial (Nadk2).